The primary structure comprises 139 residues: Plastocyanin (139 aa).

An N-terminal signal peptide occupies residues 1 to 34 (MKLISASLRRFSLAVLTILLVVSSFAVFTPSASA). The region spanning 35–139 (ETYQVKLGTD…GMVGTITVQG (105 aa)) is the Plastocyanin-like domain. His-73, Cys-123, His-126, and Met-131 together coordinate Cu cation.

It belongs to the plastocyanin family. The cofactor is Cu(2+).

The protein localises to the cellular thylakoid membrane. Its function is as follows. Participates in electron transfer between P700 and the cytochrome b6-f complex in photosystem I. The chain is Plastocyanin from Nostoc punctiforme (strain ATCC 29133 / PCC 73102).